We begin with the raw amino-acid sequence, 389 residues long: Multidrug resistance protein 1 (389 aa).

The next 11 membrane-spanning stretches (helical) occupy residues 6-26 (ITLT…GLVI), 42-62 (AVGY…PIAG), 71-91 (KIMI…FGIG), 102-122 (MLGG…IADI), 134-154 (YMSA…GFLA), 160-180 (LPFF…ILTL), 202-222 (IFAP…FGLA), 243-263 (IAIM…VLFD), 286-306 (VFLL…VTVF), 336-356 (SMFT…LFDI), and 358-378 (VNYP…LTIA).

Belongs to the major facilitator superfamily. TCR/Tet family.

It is found in the cell membrane. Functionally, energy-dependent efflux pump responsible for decreased drug accumulation in multi-drug-resistant cells. Probably uses a transmembrane proton gradient as the energy source. Causes the efflux of a variety of toxic substances, including such structurally diverse compounds as ethidium bromide, rhodamine and acridine dyes, tetraphenylphosphonium, puromycin, chloramphenicol, doxorubicin, and fluoroquinolone antibiotics. In Bacillus subtilis (strain 168), this protein is Multidrug resistance protein 1 (bmr).